The primary structure comprises 146 residues: Anti-sigma F factor (146 aa).

It belongs to the anti-sigma-factor family.

The catalysed reaction is L-seryl-[protein] + ATP = O-phospho-L-seryl-[protein] + ADP + H(+). The enzyme catalyses L-threonyl-[protein] + ATP = O-phospho-L-threonyl-[protein] + ADP + H(+). Functionally, binds to sigma F and blocks its ability to form an RNA polymerase holoenzyme (E-sigma F). Phosphorylates SpoIIAA on a serine residue. This phosphorylation may enable SpoIIAA to act as an anti-anti-sigma factor that counteracts SpoIIAB and thus releases sigma F from inhibition. The protein is Anti-sigma F factor of Bacillus licheniformis (strain ATCC 14580 / DSM 13 / JCM 2505 / CCUG 7422 / NBRC 12200 / NCIMB 9375 / NCTC 10341 / NRRL NRS-1264 / Gibson 46).